Reading from the N-terminus, the 388-residue chain is uncharacterized protein (388 aa).

It belongs to the glycosyltransferase 28 family.

This is an uncharacterized protein from Methanosarcina acetivorans (strain ATCC 35395 / DSM 2834 / JCM 12185 / C2A).